A 60-amino-acid chain; its full sequence is Large ribosomal subunit protein uL30 (60 aa).

This sequence belongs to the universal ribosomal protein uL30 family. As to quaternary structure, part of the 50S ribosomal subunit.

This chain is Large ribosomal subunit protein uL30, found in Idiomarina loihiensis (strain ATCC BAA-735 / DSM 15497 / L2-TR).